The following is a 381-amino-acid chain: Alkanesulfonate monooxygenase (381 aa).

This sequence belongs to the SsuD family. In terms of assembly, homotetramer.

The enzyme catalyses an alkanesulfonate + FMNH2 + O2 = an aldehyde + FMN + sulfite + H2O + 2 H(+). Functionally, catalyzes the desulfonation of aliphatic sulfonates. In Shigella flexneri serotype 5b (strain 8401), this protein is Alkanesulfonate monooxygenase.